The following is a 317-amino-acid chain: tRNA dimethylallyltransferase (317 aa).

Residue 14–21 participates in ATP binding; it reads GPTAVGKT. 16 to 21 contacts substrate; it reads TAVGKT. An interaction with substrate tRNA region spans residues 39 to 42; sequence DSMQ.

It belongs to the IPP transferase family. As to quaternary structure, monomer. Requires Mg(2+) as cofactor.

The enzyme catalyses adenosine(37) in tRNA + dimethylallyl diphosphate = N(6)-dimethylallyladenosine(37) in tRNA + diphosphate. Its function is as follows. Catalyzes the transfer of a dimethylallyl group onto the adenine at position 37 in tRNAs that read codons beginning with uridine, leading to the formation of N6-(dimethylallyl)adenosine (i(6)A). The protein is tRNA dimethylallyltransferase of Bacillus cereus (strain AH820).